The primary structure comprises 564 residues: Nucleoprotein (564 aa).

The interval 54 to 236 (LRKTKRGEED…VTKDESSINI (183 aa)) is binding site for the cap structure m7GTP. Positions 380 and 382 each coordinate Mn(2+). Positions 390, 497, 500, and 525 each coordinate Zn(2+). D529 is a Mn(2+) binding site.

Belongs to the arenaviridae nucleocapsid protein family. As to quaternary structure, homomultimerizes to form the nucleocapsid. Binds to viral genomic RNA. Interacts with glycoprotein G2. Interacts with protein Z; this interaction probably directs the encapsidated genome to budding sites. Interacts with protein L; this interaction does not interfere with Z-L interaction. Interacts with host IKBKE (via Protein kinase domain); the interaction inhibits IKBKE kinase activity.

Its subcellular location is the virion. It is found in the host cytoplasm. In terms of biological role, encapsidates the genome, protecting it from nucleases. The encapsidated genomic RNA is termed the nucleocapsid (NC). Serves as template for viral transcription and replication. The increased presence of protein N in host cell does not seem to trigger the switch from transcription to replication as observed in other negative strain RNA viruses. Through the interaction with host IKBKE, strongly inhibits the phosphorylation and nuclear translocation of host IRF3, a protein involved in interferon activation pathway, leading to the inhibition of interferon-beta and IRF3-dependent promoters activation. Also encodes a functional 3'-5' exoribonuclease that degrades preferentially dsRNA substrates and thereby participates in the suppression of interferon induction. This Akodon azarae (Azara's grass mouse) protein is Nucleoprotein.